We begin with the raw amino-acid sequence, 487 residues long: 1-aminocyclopropane-1-carboxylate synthase 1 (487 aa).

K286 is modified (N6-(pyridoxal phosphate)lysine).

Belongs to the class-I pyridoxal-phosphate-dependent aminotransferase family. As to quaternary structure, homodimer. It depends on pyridoxal 5'-phosphate as a cofactor.

It carries out the reaction S-adenosyl-L-methionine = 1-aminocyclopropane-1-carboxylate + S-methyl-5'-thioadenosine + H(+). The protein operates within alkene biosynthesis; ethylene biosynthesis via S-adenosyl-L-methionine; ethylene from S-adenosyl-L-methionine: step 1/2. In terms of biological role, catalyzes the formation of 1-aminocyclopropane-1-carboxylate, a direct precursor of ethylene in higher plants. This chain is 1-aminocyclopropane-1-carboxylate synthase 1 (ACC1), found in Oryza sativa subsp. indica (Rice).